A 230-amino-acid polypeptide reads, in one-letter code: Ribonuclease 3 (230 aa).

An RNase III domain is found at 5-125; the sequence is YSRFYNILGY…VIGAIYLDSD (121 aa). A Mg(2+)-binding site is contributed by E40. The active site involves D44. Positions 111 and 114 each coordinate Mg(2+). E114 is an active-site residue. A DRBM domain is found at 153–223; the sequence is DSKSKLQEIL…AEKMIEMLSQ (71 aa).

It belongs to the ribonuclease III family. As to quaternary structure, homodimer. The cofactor is Mg(2+).

Its subcellular location is the cytoplasm. The catalysed reaction is Endonucleolytic cleavage to 5'-phosphomonoester.. Functionally, digests double-stranded RNA. Involved in the processing of primary rRNA transcript to yield the immediate precursors to the large and small rRNAs (23S and 16S). Also processes some mRNAs, and tRNAs when they are encoded in the rRNA operon. Its function is as follows. CRISPR (clustered regularly interspaced short palindromic repeat) is an adaptive immune system that provides protection against mobile genetic elements (viruses, transposable elements and conjugative plasmids). CRISPR clusters contain spacers, sequences complementary to antecedent mobile elements, and target invading nucleic acids. CRISPR clusters are transcribed and processed into CRISPR RNA (crRNA). In this organism endogenous ribonuclease 3 and Cas9 are required for correct coprocessing of pre-crRNA and the trans-encoded small RNA (tracrRNA). Cas9, crRNA and tracrRNA are required for cleavage of invading DNA. Complements pre-crRNA and tracrRNA coprocessing defects in an rnc deletion in S.pyogenes strain 370. This is Ribonuclease 3 from Francisella tularensis subsp. novicida (strain U112).